The primary structure comprises 219 residues: Elongation factor Ts (219 aa).

The interval 82-85 (TDFV) is involved in Mg(2+) ion dislocation from EF-Tu.

Belongs to the EF-Ts family.

The protein resides in the cytoplasm. Its function is as follows. Associates with the EF-Tu.GDP complex and induces the exchange of GDP to GTP. It remains bound to the aminoacyl-tRNA.EF-Tu.GTP complex up to the GTP hydrolysis stage on the ribosome. The chain is Elongation factor Ts from Anaeromyxobacter dehalogenans (strain 2CP-C).